We begin with the raw amino-acid sequence, 132 residues long: Small ribosomal subunit protein uS11 (132 aa).

The protein belongs to the universal ribosomal protein uS11 family. In terms of assembly, part of the 30S ribosomal subunit. Interacts with proteins S7 and S18. Binds to IF-3.

Located on the platform of the 30S subunit, it bridges several disparate RNA helices of the 16S rRNA. Forms part of the Shine-Dalgarno cleft in the 70S ribosome. This chain is Small ribosomal subunit protein uS11, found in Chlamydia trachomatis serovar A (strain ATCC VR-571B / DSM 19440 / HAR-13).